The following is a 98-amino-acid chain: UPF0235 protein Pmen_4153 (98 aa).

Belongs to the UPF0235 family.

This chain is UPF0235 protein Pmen_4153, found in Ectopseudomonas mendocina (strain ymp) (Pseudomonas mendocina).